The chain runs to 545 residues: Phenylalanine--tRNA ligase beta subunit (545 aa).

The B5 domain maps to 268–343 (FLHKIQNVRE…MSIGYNNLEP (76 aa)). Residues aspartate 321, aspartate 327, glutamate 330, and aspartate 331 each coordinate Mg(2+).

The protein belongs to the phenylalanyl-tRNA synthetase beta subunit family. Type 2 subfamily. In terms of assembly, tetramer of two alpha and two beta subunits. The cofactor is Mg(2+).

The protein localises to the cytoplasm. It carries out the reaction tRNA(Phe) + L-phenylalanine + ATP = L-phenylalanyl-tRNA(Phe) + AMP + diphosphate + H(+). The sequence is that of Phenylalanine--tRNA ligase beta subunit from Saccharolobus islandicus (strain L.S.2.15 / Lassen #1) (Sulfolobus islandicus).